A 350-amino-acid chain; its full sequence is Divinyl chlorophyll a/b light-harvesting protein PcbB (350 aa).

The next 6 helical transmembrane spans lie at 27–47, 89–109, 141–161, 202–222, 244–264, and 305–325; these read FLAAHIAHTGLMAFWAGSFTL, IVVTAVLHLVLSMVYAAGGLM, FILGHHLFLLGLGNVQFVEWA, VMGGHAFLALFMMSGGLWHIV, LSWALAGVGWMALVAAFWCAS, and LTNIHYYLGFFYIQGHLWHAL.

It belongs to the PsbB/PsbC family. IsiA/Pcb subfamily. In terms of assembly, the antenna complex consists of divinyl chlorophylls (a and b) and divinyl chlorophyll a/b binding proteins. Under iron-starvation forms a complex with PSI, consisting of a PSI trimer surrounded by a ring composed of 18 PcbB subunits. It depends on divinyl chlorophyll a as a cofactor. Requires divinyl chlorophyll b as cofactor.

The protein localises to the cellular thylakoid membrane. In terms of biological role, the antenna complex functions as a light receptor, it captures and delivers excitation energy to photosystems I. The Prochlorales pcb genes are not related to higher plant LHCs. This is Divinyl chlorophyll a/b light-harvesting protein PcbB (pcbB) from Prochlorococcus marinus (strain MIT 9313).